A 564-amino-acid polypeptide reads, in one-letter code: MFS-type efflux transporter ffsH (564 aa).

Basic and acidic residues predominate over residues 1 to 18 (MSEAEKKASQDAQHKEPM). Positions 1–37 (MSEAEKKASQDAQHKEPMADSETQLDSDSAPSSQAEK) are disordered. A compositionally biased stretch (polar residues) spans 21 to 35 (SETQLDSDSAPSSQA). The next 4 helical transmembrane spans lie at 43-63 (YPLS…ISAM), 98-118 (YVMI…GGAN), 131-151 (GIGA…LVPM), and 157-177 (FIGL…IIGG). The N-linked (GlcNAc...) asparagine glycan is linked to N182. 9 helical membrane-spanning segments follow: residues 187 to 207 (WVFY…VLFL), 226 to 246 (VVGN…LTYG), 254 to 274 (AANI…FIAW), 300 to 320 (FFIS…YPVY), 334 to 354 (VHLL…GGLV), 362 to 382 (PIHM…SVLT), 389 to 409 (AWAV…STTL), 427 to 447 (TWAY…AAIF), and 502 to 522 (VWLV…FEKE). Positions 540–564 (GDAKGDVERGEGQNDSREGGQNENV) are disordered. N-linked (GlcNAc...) asparagine glycosylation occurs at N553.

Belongs to the major facilitator superfamily.

Its subcellular location is the cell membrane. MFS-type efflux transporter; part of the gene cluster that mediates the biosynthesis of the cytotoxic leucine-containing cytochalasans, including aspochalasin C, aspochalasin E, TMC-169, flavichalasine F, aspergillin PZ, aspochalasin M and flavichalasine G. FfsH might be involved in the excretion of cytochalasans. This chain is MFS-type efflux transporter ffsH, found in Aspergillus flavipes.